The following is a 365-amino-acid chain: Snurportin-1 (365 aa).

The 63-residue stretch at 10–72 folds into the IBB domain; it reads GGVALAAPNS…RLAEGDWAGV (63 aa). 2 disordered regions span residues 15–34 and 69–90; these read AAPN…KGRG and WAGV…EMEV. Acidic residues predominate over residues 73-90; the sequence is ESDEDGGEDGDGEEEMEV. The interval 129–131 is interaction with m3G-cap structure; that stretch reads GKR. The segment at 211-333 is necessary for binding to the m3G-cap structure; sequence LSSKIQEEEG…GKAQPSAEAA (123 aa). Residues 317-365 form a disordered region; the sequence is RSKKLAAGKAQPSAEAAARNGHYELEHLSTPQPANSAQGQEEAGSQMEN. Residues 345–355 are compositionally biased toward polar residues; that stretch reads STPQPANSAQG.

It belongs to the snurportin family.

The protein resides in the nucleus. The protein localises to the cytoplasm. Its function is as follows. Functions as an U snRNP-specific nuclear import adapter. Involved in the trimethylguanosine (m3G)-cap-dependent nuclear import of U snRNPs. Binds specifically to the terminal m3G-cap U snRNAs. The protein is Snurportin-1 (SNUPN) of Gallus gallus (Chicken).